We begin with the raw amino-acid sequence, 771 residues long: Metal transporter CNNM4 (771 aa).

Over 1-175 the chain is Extracellular; the sequence is MAPGGGGGRR…LLFMVEEHGR (175 aa). Residue asparagine 119 is glycosylated (N-linked (GlcNAc...) asparagine). The CNNM transmembrane domain occupies 175 to 355; it reads RFLPLWLHIL…EPYNDLVKEE (181 aa). The chain crosses the membrane as a helical span at residues 176 to 196; it reads FLPLWLHILLVMVLLVLSGIF. Topologically, residues 197-237 are cytoplasmic; sequence SGLNLGLMALDPMELRIVQNCGTEKERKYARKIEPIRRKGN. Residues 238-258 constitute an intramembrane region (helical); sequence YLLCSLLLGNVLVNTSLTILL. The Cytoplasmic portion of the chain corresponds to 259–261; that stretch reads DNL. The helical transmembrane segment at 262-282 threads the bilayer; it reads IGSGIMAVASSTIGIVIFGEI. Topologically, residues 283–290 are extracellular; that stretch reads LPQALCSR. A helical membrane pass occupies residues 291–313; sequence HGLAVGANTIVLTKVFMLLTFPL. Residues 314 to 771 lie on the Cytoplasmic side of the membrane; it reads SFPISKLLDF…LHRASEEETI (458 aa). 2 CBS domains span residues 374–435 and 442–508; these read MTQL…CTPL and YNHP…ILDE. Phosphoserine occurs at positions 657, 661, and 766.

Belongs to the ACDP family. In terms of assembly, interacts with COX11. In terms of tissue distribution, cornea, retina, teeth (at protein level). In the retina it is predominantly localized to the outer plexiform layer, inner plexiform layer and ganglion cell layer. In the tooth strongest expression is observed in the cell body of the ameloblasts. Expressed at high levels in the gastrointestinal tract and testis.

It localises to the cell membrane. Probable metal transporter. The interaction with the metal ion chaperone COX11 suggests that it may play a role in sensory neuron functions. May play a role in biomineralization and retinal function. The protein is Metal transporter CNNM4 (Cnnm4) of Mus musculus (Mouse).